The following is a 618-amino-acid chain: Cell pattern formation-associated protein STU1 (618 aa).

The span at 13 to 28 (MSAGPTQQPPTVTSYN) shows a compositional bias: polar residues. The tract at residues 13–105 (MSAGPTQQPP…FDTSGQIAPP (93 aa)) is disordered. The segment covering 48-59 (YGGYPYTNGMPS) has biased composition (low complexity). Residues 91–101 (NQYSGFDTSGQ) show a composition bias toward polar residues. Residues 110–216 (RVTATLWEDE…HNISALLYHP (107 aa)) form the HTH APSES-type domain. Positions 144-165 (GTKLLNVAGMTRGRRDGILKSE) form a DNA-binding region, H-T-H motif. Disordered stretches follow at residues 229–355 (AERR…YDGS) and 390–618 (SEMG…SRRR). Composition is skewed to polar residues over residues 256–266 (MSQNGSQSLSG), 284–298 (TSASSAVNMGSSDSF), 305–326 (AMSNGQQNPMSIDTSLSNTRSM), and 336–355 (GSTLQSMQAYPPASQSYDGS). A compositionally biased stretch (basic and acidic residues) spans 438–451 (DHEHDPEYTHDSRT). Residues 452-476 (YDNSQSQYNYTAPPVSSISSEQAHV) are compositionally biased toward polar residues. Over residues 494–512 (PRSAAAPQAYYQQAYSTSP) the composition is skewed to low complexity. A compositionally biased stretch (polar residues) spans 513 to 563 (RSATHQSTSNLYNVMSNDRGSTTNGSANGDVYSQSTDLSNGYATPVTNGNA). Residues 566–588 (KRGRDDDDDRSSSSGQMDLKRRK) form a nuclear localization domain region.

This sequence belongs to the EFG1/PHD1/stuA family.

It is found in the nucleus. Transcription factor that regulates asexual reproduction. Binds the StuA-response elements (StRE) with the consensus sequence 5'-(A/T)CGCG(T/A)N(A/C)-3' at the promoters of target genes. Required for appressorium-mediated infection of rice leaves due to its involvement in the mobilization of lipids and glycogen. This chain is Cell pattern formation-associated protein STU1, found in Pyricularia oryzae (strain 70-15 / ATCC MYA-4617 / FGSC 8958) (Rice blast fungus).